The following is a 148-amino-acid chain: Deoxyuridine 5'-triphosphate nucleotidohydrolase (148 aa).

Residues 68 to 70, Asn-81, 85 to 87, and Lys-95 each bind substrate; these read RSG and TID.

Belongs to the dUTPase family. Mg(2+) serves as cofactor.

The enzyme catalyses dUTP + H2O = dUMP + diphosphate + H(+). The protein operates within pyrimidine metabolism; dUMP biosynthesis; dUMP from dCTP (dUTP route): step 2/2. In terms of biological role, this enzyme is involved in nucleotide metabolism: it produces dUMP, the immediate precursor of thymidine nucleotides and it decreases the intracellular concentration of dUTP so that uracil cannot be incorporated into DNA. This chain is Deoxyuridine 5'-triphosphate nucleotidohydrolase, found in Rickettsia prowazekii (strain Madrid E).